The sequence spans 659 residues: Pollen receptor-like kinase 6 (659 aa).

Residues 1 to 26 (MAAAVLNPGFFLLILLLSFSISPSLQ) form the signal peptide. At 27–266 (YVSESEPLVR…SVPETSNKAA (240 aa)) the chain is on the extracellular side. A disulfide bond links Cys-58 and Cys-67. 5 LRR repeats span residues 95-118 (LPNL…FFKL), 120-142 (GLKS…FFKD), 143-167 (MSKL…ITQL), 168-190 (PQLE…EFGS), and 192-214 (KNLK…SIAD). Residue Asn-128 is glycosylated (N-linked (GlcNAc...) asparagine). The N-linked (GlcNAc...) asparagine glycan is linked to Asn-179. A glycan (N-linked (GlcNAc...) asparagine) is linked at Asn-221. Positions 226 to 242 (EYLCGPVVDVGCENIEL) are LURE peptides binding. An intrachain disulfide couples Cys-229 to Cys-237. The segment at 241–260 (ELNDPQEGQPPSKPSSSVPE) is disordered. The helical transmembrane segment at 267–287 (INAIMVSISLLLLFFIIVGVI) threads the bilayer. Residues 288 to 659 (KRRNKKKNPD…AVRRIEQVKT (372 aa)) are Cytoplasmic-facing. The tract at residues 312–354 (VRISESSSTTAKRSTDSSRKRGGHSDDGSTKKGVSNIGKGGNG) is disordered. A compositionally biased stretch (basic and acidic residues) spans 324-341 (RSTDSSRKRGGHSDDGST). Residues 384–659 (KAAAEVLGNG…AVRRIEQVKT (276 aa)) form the Protein kinase domain. ATP-binding positions include 390–398 (LGNGSLGSA) and Lys-412. Ser-464 is subject to Phosphoserine. Residues Thr-484 and Thr-557 each carry the phosphothreonine modification. Position 561 is a phosphoserine (Ser-561).

The protein belongs to the protein kinase superfamily. Ser/Thr protein kinase family. As to quaternary structure, interacts with ROPGEF8, ROPGEF9, ROPGEF12, ROPGEF13, PRK3, LIP1 and LIP2. Binds to LURE peptides via its LRR repeats; interacts with LURE1.1, LURE1.2, LURE1.3 and LURE1.4. In terms of tissue distribution, expressed specifically in the pollen tube, predominantly at the tip.

The protein resides in the cell membrane. Its subcellular location is the cytoplasmic granule. Its function is as follows. Key receptor for sensing species-specific attractants in cooperation with other pollen receptor-like kinases. Essential for pollen tube reorientation toward attractant peptides. This is Pollen receptor-like kinase 6 from Arabidopsis thaliana (Mouse-ear cress).